The chain runs to 512 residues: MTQSALHTEFGGIAALRDALARRQVSAVELAQSGLDAAQAASGLNAFLHIDPELTLAQARAADAALAAGTAGPLAGIPIAHKDAFVTRGWRTTAGSKMLAGYASPFDATVVERLAEAGAVSLGKLNCDEFAMGSGNENSAYGPVRNPWDTRAVPGGSSGGSAAAVAARLVAAATGTDTGGSVRQPAALCGVSGIKPTYGTVSRYGMIAFGSSLDQAGPLAPSSRDLLELLDVMTGFDPRDATSLQACDGQANESGRVRRGHDAAQAGYDAAGSQPLKGLRIGVPQEYFGAGLAPDVAAAVEAALAQFEQLGAVRVPVSLPRTELAIPAYYVIAPAEASSNLARYDGVRYGHRAAQYGDLNEMISRSRAEGFGDEVKRRILIGTYVLSHGYYDAYYLQAQRLRRLIAQDFQRAFADQCDVIMGPVSPTVAKNIGDNRDDPTADWLADVYTLGVSLAGLPAMSVPCGFGGQDGRRPVGLQIIGNYFDEGRLLALADRYQQVTDWHQRAPVSQDA.

Active-site charge relay system residues include Lys-82 and Ser-157. Ser-181 functions as the Acyl-ester intermediate in the catalytic mechanism.

The protein belongs to the amidase family. GatA subfamily. As to quaternary structure, heterotrimer of A, B and C subunits.

It catalyses the reaction L-glutamyl-tRNA(Gln) + L-glutamine + ATP + H2O = L-glutaminyl-tRNA(Gln) + L-glutamate + ADP + phosphate + H(+). Its function is as follows. Allows the formation of correctly charged Gln-tRNA(Gln) through the transamidation of misacylated Glu-tRNA(Gln) in organisms which lack glutaminyl-tRNA synthetase. The reaction takes place in the presence of glutamine and ATP through an activated gamma-phospho-Glu-tRNA(Gln). The polypeptide is Glutamyl-tRNA(Gln) amidotransferase subunit A (Bordetella bronchiseptica (strain ATCC BAA-588 / NCTC 13252 / RB50) (Alcaligenes bronchisepticus)).